A 396-amino-acid polypeptide reads, in one-letter code: Protein-export membrane protein SecD (396 aa).

Transmembrane regions (helical) follow at residues 12–32 (ILILIIFVTLSVFLIVFKGLD), 243–263 (LKGTAIALLLAFIAVGIIVSI), 272–292 (IPILITCISEVIIILGFASLI), 298–318 (LPSIAGIIAAVGTGVDNQIVI), 338–358 (FFIIFASAATSIAAMLPLFVL), and 360–380 (VGMLKGFAITTIAGVLIGIFI).

Belongs to the SecD/SecF family. SecD subfamily. Part of the protein translocation apparatus. Forms a complex with SecF.

The protein localises to the cell membrane. Involved in protein export. The chain is Protein-export membrane protein SecD from Methanocaldococcus jannaschii (strain ATCC 43067 / DSM 2661 / JAL-1 / JCM 10045 / NBRC 100440) (Methanococcus jannaschii).